Consider the following 245-residue polypeptide: 8-amino-3,8-dideoxy-manno-octulosonate cytidylyltransferase (245 aa).

The protein belongs to the KdsB family.

The protein localises to the cytoplasm. The catalysed reaction is 8-amino-3,8-dideoxy-alpha-D-manno-octulosonate + CTP = CMP-8-amino-3,8-dideoxy-alpha-D-manno-oct-2-ulosonate + diphosphate. It functions in the pathway bacterial outer membrane biogenesis; lipopolysaccharide biosynthesis. Its function is as follows. Activates KDO8N (a required 8-carbon sugar) for incorporation into bacterial lipopolysaccharide in the Shewanella genus. The protein is 8-amino-3,8-dideoxy-manno-octulosonate cytidylyltransferase of Shewanella amazonensis (strain ATCC BAA-1098 / SB2B).